The sequence spans 188 residues: GTP cyclohydrolase 1 (188 aa).

Residues Cys78, His81, and Cys150 each contribute to the Zn(2+) site.

This sequence belongs to the GTP cyclohydrolase I family. Toroid-shaped homodecamer, composed of two pentamers of five dimers.

It catalyses the reaction GTP + H2O = 7,8-dihydroneopterin 3'-triphosphate + formate + H(+). Its pathway is cofactor biosynthesis; 7,8-dihydroneopterin triphosphate biosynthesis; 7,8-dihydroneopterin triphosphate from GTP: step 1/1. The sequence is that of GTP cyclohydrolase 1 from Halalkalibacterium halodurans (strain ATCC BAA-125 / DSM 18197 / FERM 7344 / JCM 9153 / C-125) (Bacillus halodurans).